The following is a 174-amino-acid chain: Adenine phosphoribosyltransferase (174 aa).

It belongs to the purine/pyrimidine phosphoribosyltransferase family. Homodimer.

The protein localises to the cytoplasm. It catalyses the reaction AMP + diphosphate = 5-phospho-alpha-D-ribose 1-diphosphate + adenine. Its pathway is purine metabolism; AMP biosynthesis via salvage pathway; AMP from adenine: step 1/1. Catalyzes a salvage reaction resulting in the formation of AMP, that is energically less costly than de novo synthesis. The chain is Adenine phosphoribosyltransferase from Lachnoclostridium phytofermentans (strain ATCC 700394 / DSM 18823 / ISDg) (Clostridium phytofermentans).